Reading from the N-terminus, the 506-residue chain is Chromodomain Y-like protein 2 (506 aa).

Residues 7-67 (YEVERIVDKR…LHMSKDKRIK (61 aa)) form the Chromo domain. A disordered region spans residues 64–177 (KRIKSGKQSS…RHFGNGSHQP (114 aa)). Basic and acidic residues predominate over residues 88–98 (KLSHRPSDPGK). The segment covering 101–120 (GTSHKRKRINPPLAKPKKGY) has biased composition (basic residues). Residues 133–143 (KTVSYRTTPSG) are compositionally biased toward polar residues.

In terms of assembly, interacts (via chromo domain) with histone H3K9me3. As to expression, ubiquitously expressed.

It is found in the nucleus. The protein is Chromodomain Y-like protein 2 (CDYL2) of Homo sapiens (Human).